A 144-amino-acid polypeptide reads, in one-letter code: Maximins 1/H12 (144 aa).

A signal peptide spans 1-18; the sequence is MNFKYIVAVSFLIASAYA. The propeptide occupies 19 to 43; sequence RSEENDEQSLSQRDVLEEESLREIR. N70 bears the Asparagine amide mark. A propeptide spanning residues 74–123 is cleaved from the precursor; sequence TAEEHEVMKRLEVVMRDLDSLDYPEEASERETRDFNQEEIANLYTKKEKR. Isoleucine amide is present on I143.

It belongs to the bombinin family. Expressed by the skin glands.

Its subcellular location is the secreted. Its function is as follows. Maximin-1 shows antibacterial activity against both Gram-positive and Gram-negative bacteria. It also shows antimicrobial activity against the fungus C.albicans, but not against A.flavus nor P.uticale. It has little hemolytic activity. It possess a significant cytotoxicity against tumor cell lines. It does not possess a significant anti-HIV activity. It shows high spermicidal activity. Maximin-H12 shows antimicrobial activity against bacteria and against the fungus C.albicans. Shows strong hemolytic activity. The chain is Maximins 1/H12 from Bombina maxima (Giant fire-bellied toad).